Consider the following 200-residue polypeptide: Ribonuclease HII (200 aa).

Residues 14 to 200 form the RNase H type-2 domain; sequence SRLAGVDEVG…FAPVKQWQLL (187 aa). A divalent metal cation-binding residues include D20, E21, and D112.

The protein belongs to the RNase HII family. Mn(2+) serves as cofactor. Mg(2+) is required as a cofactor.

The protein localises to the cytoplasm. It carries out the reaction Endonucleolytic cleavage to 5'-phosphomonoester.. Functionally, endonuclease that specifically degrades the RNA of RNA-DNA hybrids. The chain is Ribonuclease HII from Chromohalobacter salexigens (strain ATCC BAA-138 / DSM 3043 / CIP 106854 / NCIMB 13768 / 1H11).